The sequence spans 192 residues: Xanthine phosphoribosyltransferase (192 aa).

Xanthine contacts are provided by L20 and N27. Position 128–132 (128–132 (ANGQA)) interacts with 5-phospho-alpha-D-ribose 1-diphosphate. Residue K156 coordinates xanthine.

This sequence belongs to the purine/pyrimidine phosphoribosyltransferase family. Xpt subfamily. As to quaternary structure, homodimer.

It is found in the cytoplasm. The enzyme catalyses XMP + diphosphate = xanthine + 5-phospho-alpha-D-ribose 1-diphosphate. Its pathway is purine metabolism; XMP biosynthesis via salvage pathway; XMP from xanthine: step 1/1. Functionally, converts the preformed base xanthine, a product of nucleic acid breakdown, to xanthosine 5'-monophosphate (XMP), so it can be reused for RNA or DNA synthesis. In Lacticaseibacillus casei (strain BL23) (Lactobacillus casei), this protein is Xanthine phosphoribosyltransferase.